A 542-amino-acid chain; its full sequence is CTP synthase (542 aa).

The tract at residues 1–265 is amidoligase domain; that stretch reads MTRYIFITGG…DDEVLSVFGI (265 aa). Residue serine 13 participates in CTP binding. UTP is bound at residue serine 13. ATP-binding positions include 14–19 and aspartate 71; that span reads SLGKGL. Mg(2+) contacts are provided by aspartate 71 and glutamate 139. CTP is bound by residues 146 to 148, 186 to 191, and lysine 222; these read DIE and KTKPTQ. Residues 186–191 and lysine 222 each bind UTP; that span reads KTKPTQ. Residues 291-541 enclose the Glutamine amidotransferase type-1 domain; the sequence is TIAIVGKYTG…VEAAVEQSRL (251 aa). Glycine 353 contacts L-glutamine. Cysteine 380 (nucleophile; for glutamine hydrolysis) is an active-site residue. L-glutamine contacts are provided by residues 381–384, glutamate 404, and arginine 469; that span reads FGMQ. Catalysis depends on residues histidine 514 and glutamate 516.

It belongs to the CTP synthase family. As to quaternary structure, homotetramer.

It catalyses the reaction UTP + L-glutamine + ATP + H2O = CTP + L-glutamate + ADP + phosphate + 2 H(+). It carries out the reaction L-glutamine + H2O = L-glutamate + NH4(+). The enzyme catalyses UTP + NH4(+) + ATP = CTP + ADP + phosphate + 2 H(+). It participates in pyrimidine metabolism; CTP biosynthesis via de novo pathway; CTP from UDP: step 2/2. Allosterically activated by GTP, when glutamine is the substrate; GTP has no effect on the reaction when ammonia is the substrate. The allosteric effector GTP functions by stabilizing the protein conformation that binds the tetrahedral intermediate(s) formed during glutamine hydrolysis. Inhibited by the product CTP, via allosteric rather than competitive inhibition. Functionally, catalyzes the ATP-dependent amination of UTP to CTP with either L-glutamine or ammonia as the source of nitrogen. Regulates intracellular CTP levels through interactions with the four ribonucleotide triphosphates. This is CTP synthase from Parvibaculum lavamentivorans (strain DS-1 / DSM 13023 / NCIMB 13966).